We begin with the raw amino-acid sequence, 300 residues long: MKIAVVGAGKWGSALYDALSVKNECAITSFHEKDLSYFVSTKEALGYEYLVFALYAQGIHEWLVNNFKDLNQKILVASKGIDCKSLKFMDEVFGEFISSDRLCFLSGPSFASEVLEKKPCALVISGKNQNLCSKFASFFPNYIKTYTSLDVKGAEICGAYKNVLAIASGVCDGLNLGNNARASLVSRGLVEMHRFGQFFNAKEETFLGLSGAGDLFLTASSNLSRNYRVGSSLASGKNIKDVLIELGEVAEGVQTAYAIHALSKQFQIYTPIVNEVVLMLEGKNAWESLKDLMSSKEEIS.

The NADPH site is built by tryptophan 11, lysine 33, and lysine 79. 3 residues coordinate sn-glycerol 3-phosphate: lysine 79, glycine 107, and serine 109. NADPH is bound at residue alanine 111. Lysine 161, aspartate 214, serine 224, arginine 225, and asparagine 226 together coordinate sn-glycerol 3-phosphate. Lysine 161 serves as the catalytic Proton acceptor. Residue arginine 225 coordinates NADPH. Residues valine 249 and glutamate 251 each coordinate NADPH.

The protein belongs to the NAD-dependent glycerol-3-phosphate dehydrogenase family.

Its subcellular location is the cytoplasm. It catalyses the reaction sn-glycerol 3-phosphate + NAD(+) = dihydroxyacetone phosphate + NADH + H(+). The catalysed reaction is sn-glycerol 3-phosphate + NADP(+) = dihydroxyacetone phosphate + NADPH + H(+). It functions in the pathway membrane lipid metabolism; glycerophospholipid metabolism. In terms of biological role, catalyzes the reduction of the glycolytic intermediate dihydroxyacetone phosphate (DHAP) to sn-glycerol 3-phosphate (G3P), the key precursor for phospholipid synthesis. The polypeptide is Glycerol-3-phosphate dehydrogenase [NAD(P)+] (Campylobacter lari (strain RM2100 / D67 / ATCC BAA-1060)).